Consider the following 442-residue polypeptide: Trigger factor (442 aa).

Residues 162 to 247 (GDRMTFDFEG…VKAIESRELP (86 aa)) form the PPIase FKBP-type domain.

This sequence belongs to the FKBP-type PPIase family. Tig subfamily.

The protein resides in the cytoplasm. The enzyme catalyses [protein]-peptidylproline (omega=180) = [protein]-peptidylproline (omega=0). Its function is as follows. Involved in protein export. Acts as a chaperone by maintaining the newly synthesized protein in an open conformation. Functions as a peptidyl-prolyl cis-trans isomerase. The protein is Trigger factor of Magnetococcus marinus (strain ATCC BAA-1437 / JCM 17883 / MC-1).